Here is a 1518-residue protein sequence, read N- to C-terminus: Probable serine/threonine-protein kinase HSL1 (1518 aa).

Disordered regions lie at residues 1 to 43 (MTGH…GHLE) and 55 to 83 (RLSQ…PWKL). Residues 55 to 68 (RLSQPDSTVSVATK) are compositionally biased toward polar residues. The Protein kinase domain maps to 81 to 369 (WKLGKTLGKG…TQEILKHPLI (289 aa)). ATP contacts are provided by residues 87-95 (LGKGSSGRV) and Lys-110. Asp-239 (proton acceptor) is an active-site residue. A disordered region spans residues 467–502 (LSSSSENKKSATESSVNEPRIEYASKTANNTGLRSE). Residues 492–501 (KTANNTGLRS) show a composition bias toward polar residues. Position 511 is a phosphoserine (Ser-511). A compositionally biased stretch (low complexity) spans 599–611 (SNSRLSLSASTSR). Residues 599 to 651 (SNSRLSLSASTSRETVHDNEMPLPQLPKSPSRYSLSRRAIHASPSTKSIHKSL) form a disordered region. Phosphoserine occurs at positions 629 and 685. Positions 741 to 783 (EEEDNEKERDTQRQRQNDTKSSADTFTISGVSTNKENEGPEYP) are disordered. Basic and acidic residues predominate over residues 746-758 (EKERDTQRQRQND). The span at 759-774 (TKSSADTFTISGVSTN) shows a compositional bias: polar residues. Phosphoserine occurs at positions 837 and 866. A compositionally biased stretch (basic and acidic residues) spans 856–876 (EQLQKKNDRPSPLKPIQHQEL). Disordered regions lie at residues 856–898 (EQLQ…RRNI), 1005–1030 (DDKH…KQSA), 1150–1170 (APSD…RASV), and 1220–1243 (SPEN…RDSN). At Ser-1220 the chain carries Phosphoserine. Polar residues predominate over residues 1222-1243 (ENPSNTHMQKRFSSTRGSRDSN). Residue Ser-1250 is modified to Phosphoserine. The tract at residues 1259–1291 (EEDQDGHTSQADILESSMSYSKRRPSEESVNPK) is disordered. The span at 1265-1278 (HTSQADILESSMSY) shows a compositional bias: polar residues. Phosphoserine is present on residues Ser-1284, Ser-1287, and Ser-1325.

The protein belongs to the protein kinase superfamily. CAMK Ser/Thr protein kinase family. NIM1 subfamily.

The protein resides in the bud neck. The enzyme catalyses L-seryl-[protein] + ATP = O-phospho-L-seryl-[protein] + ADP + H(+). It carries out the reaction L-threonyl-[protein] + ATP = O-phospho-L-threonyl-[protein] + ADP + H(+). The protein is Probable serine/threonine-protein kinase HSL1 (HSL1) of Saccharomyces cerevisiae (strain ATCC 204508 / S288c) (Baker's yeast).